Here is a 317-residue protein sequence, read N- to C-terminus: Lipopolysaccharide heptosyltransferase 1 (317 aa).

ADP-L-glycero-beta-D-manno-heptose is bound by residues Thr187, Thr188, Lys192, Glu222, Met242, Asp261, Thr262, Gly263, and His266.

It belongs to the glycosyltransferase 9 family.

The protein localises to the cell inner membrane. It carries out the reaction an alpha-Kdo-(2-&gt;4)-alpha-Kdo-(2-&gt;6)-lipid A + ADP-L-glycero-beta-D-manno-heptose = an L-alpha-D-Hep-(1-&gt;5)-[alpha-Kdo-(2-&gt;4)]-alpha-Kdo-(2-&gt;6)-lipid A + ADP + H(+). Its pathway is bacterial outer membrane biogenesis; LPS core biosynthesis. In terms of biological role, glycosyltransferase involved in the biosynthesis of the core oligosaccharide region of lipopolysaccharide (LPS). Catalyzes the addition of the first heptose unit to one 3-deoxy-D-manno-octulosonic acid (Kdo) residue of the Kdo2-lipid A module. This Salmonella typhimurium (strain LT2 / SGSC1412 / ATCC 700720) protein is Lipopolysaccharide heptosyltransferase 1.